We begin with the raw amino-acid sequence, 225 residues long: Ribonuclease 3 (225 aa).

The region spanning 5 to 127 (IDKLERKIGY…IIGAVYLDSD (123 aa)) is the RNase III domain. Residue glutamate 40 participates in Mg(2+) binding. Aspartate 44 is a catalytic residue. The Mg(2+) site is built by aspartate 113 and glutamate 116. Glutamate 116 is an active-site residue. One can recognise a DRBM domain in the interval 154-224 (DPKTRLQEFL…AETALEQLSN (71 aa)).

This sequence belongs to the ribonuclease III family. In terms of assembly, homodimer. Mg(2+) is required as a cofactor.

The protein localises to the cytoplasm. It catalyses the reaction Endonucleolytic cleavage to 5'-phosphomonoester.. Digests double-stranded RNA. Involved in the processing of primary rRNA transcript to yield the immediate precursors to the large and small rRNAs (23S and 16S). Processes some mRNAs, and tRNAs when they are encoded in the rRNA operon. Processes pre-crRNA and tracrRNA of type II CRISPR loci if present in the organism. In Vibrio atlanticus (strain LGP32) (Vibrio splendidus (strain Mel32)), this protein is Ribonuclease 3.